We begin with the raw amino-acid sequence, 337 residues long: MANSC domain-containing protein 4 (337 aa).

A signal peptide spans Met1–Gly18. Residues Leu19–Gly278 are Extracellular-facing. Positions Arg33 to Tyr113 constitute an MANSC domain. Residues Asn114, Asn227, and Asn251 are each glycosylated (N-linked (GlcNAc...) asparagine). Composition is skewed to polar residues over residues Ser216–Ile230 and Thr239–Thr260. The tract at residues Ser216–Asp277 is disordered. A helical transmembrane segment spans residues Ala279–Leu299. At Cys300–Ser337 the chain is on the cytoplasmic side. The interval Arg314–Ser337 is disordered.

Its subcellular location is the membrane. The chain is MANSC domain-containing protein 4 (Mansc4) from Mus musculus (Mouse).